Here is a 182-residue protein sequence, read N- to C-terminus: ATP-dependent protease subunit HslV (182 aa).

Threonine 10 is a catalytic residue. Na(+) contacts are provided by alanine 166, cysteine 169, and serine 172.

The protein belongs to the peptidase T1B family. HslV subfamily. As to quaternary structure, a double ring-shaped homohexamer of HslV is capped on each side by a ring-shaped HslU homohexamer. The assembly of the HslU/HslV complex is dependent on binding of ATP.

Its subcellular location is the cytoplasm. It catalyses the reaction ATP-dependent cleavage of peptide bonds with broad specificity.. Its activity is regulated as follows. Allosterically activated by HslU binding. Functionally, protease subunit of a proteasome-like degradation complex believed to be a general protein degrading machinery. The sequence is that of ATP-dependent protease subunit HslV from Rickettsia typhi (strain ATCC VR-144 / Wilmington).